The chain runs to 86 residues: Large ribosomal subunit protein uL23 (86 aa).

It belongs to the universal ribosomal protein uL23 family. As to quaternary structure, part of the 50S ribosomal subunit. Contacts protein L29.

Binds to 23S rRNA. One of the proteins that surrounds the polypeptide exit tunnel on the outside of the ribosome. The protein is Large ribosomal subunit protein uL23 of Caldivirga maquilingensis (strain ATCC 700844 / DSM 13496 / JCM 10307 / IC-167).